The sequence spans 76 residues: uncharacterized protein (76 aa).

Residues 36–41 (PDIIIT) are required for interaction with PPP3CA. A phosphothreonine mark is found at threonine 44 and threonine 46.

Interacts (via PxIxIT motif, when phosphorylated on Thr-44) with PPP3CA. Not expressed in pancreatic duct cells (at protein level). Abundantly expressed in the pancreas and weakly expressed in the thyroid. As to expression, not expressed in pancreatic duct cells (at protein level). Abundantly expressed in the lymph node and weakly expressed in the stomach, trachea and bone marrow.

This is an uncharacterized protein from Homo sapiens (Human).